Here is a 651-residue protein sequence, read N- to C-terminus: Probable potassium transport system protein Kup (651 aa).

A run of 12 helical transmembrane segments spans residues 41-61, 82-102, 130-150, 163-183, 194-214, 235-255, 276-296, 309-329, 366-386, 395-415, 426-446, and 450-470; these read LVLGALGVVYGDIGTSPIYAF, VVSLIFWALTLVVTVKYVLFV, LILGVGICGAALFFGDAVITP, IVAPNLTPFVVPATVVILVTL, VAIVFGPIMALWFVALGASGL, FLTVSPAVAFVTVGAVFLAMT, WLWIVFPCLLLNYFGQAAFIL, MIPSFALWPMVLLATAATVIA, IYIPRVNLLLGLAVVILVLGF, AYGIAVTGNMLVTTVLLYIVM, ALPIILGFLVIDMLFFSANII, and EGGWASIGIATVLVLIMWTWV.

Belongs to the HAK/KUP transporter (TC 2.A.72) family.

The protein resides in the cell inner membrane. The enzyme catalyses K(+)(in) + H(+)(in) = K(+)(out) + H(+)(out). In terms of biological role, transport of potassium into the cell. Likely operates as a K(+):H(+) symporter. The chain is Probable potassium transport system protein Kup from Brucella suis (strain ATCC 23445 / NCTC 10510).